The sequence spans 163 residues: 2-C-methyl-D-erythritol 2,4-cyclodiphosphate synthase (163 aa).

Residues Asp-12 and His-14 each contribute to the a divalent metal cation site. 4-CDP-2-C-methyl-D-erythritol 2-phosphate-binding positions include 12–14 (DVH) and 38–39 (HS). A divalent metal cation is bound at residue His-46. Residues 60-62 (DIG), 136-139 (TTSE), Phe-143, and Arg-146 each bind 4-CDP-2-C-methyl-D-erythritol 2-phosphate.

Belongs to the IspF family. Homotrimer. The cofactor is a divalent metal cation.

It catalyses the reaction 4-CDP-2-C-methyl-D-erythritol 2-phosphate = 2-C-methyl-D-erythritol 2,4-cyclic diphosphate + CMP. It participates in isoprenoid biosynthesis; isopentenyl diphosphate biosynthesis via DXP pathway; isopentenyl diphosphate from 1-deoxy-D-xylulose 5-phosphate: step 4/6. In terms of biological role, involved in the biosynthesis of isopentenyl diphosphate (IPP) and dimethylallyl diphosphate (DMAPP), two major building blocks of isoprenoid compounds. Catalyzes the conversion of 4-diphosphocytidyl-2-C-methyl-D-erythritol 2-phosphate (CDP-ME2P) to 2-C-methyl-D-erythritol 2,4-cyclodiphosphate (ME-CPP) with a corresponding release of cytidine 5-monophosphate (CMP). This is 2-C-methyl-D-erythritol 2,4-cyclodiphosphate synthase from Xanthomonas oryzae pv. oryzae (strain MAFF 311018).